Consider the following 584-residue polypeptide: Aspartate--tRNA(Asp/Asn) ligase (584 aa).

An L-aspartate-binding site is contributed by Glu177. The tract at residues 201–204 (QLFK) is aspartate. L-aspartate is bound at residue Arg223. ATP is bound by residues 223-225 (RDE) and Gln232. Residue His447 coordinates L-aspartate. Glu481 provides a ligand contact to ATP. L-aspartate is bound at residue Arg488. Position 533–536 (533–536 (GLDR)) interacts with ATP.

It belongs to the class-II aminoacyl-tRNA synthetase family. Type 1 subfamily. In terms of assembly, homodimer.

Its subcellular location is the cytoplasm. The enzyme catalyses tRNA(Asx) + L-aspartate + ATP = L-aspartyl-tRNA(Asx) + AMP + diphosphate. Aspartyl-tRNA synthetase with relaxed tRNA specificity since it is able to aspartylate not only its cognate tRNA(Asp) but also tRNA(Asn). Reaction proceeds in two steps: L-aspartate is first activated by ATP to form Asp-AMP and then transferred to the acceptor end of tRNA(Asp/Asn). The polypeptide is Aspartate--tRNA(Asp/Asn) ligase (Chlamydia pneumoniae (Chlamydophila pneumoniae)).